The primary structure comprises 158 residues: Transcription elongation factor GreA (158 aa).

Positions 53 to 73 (EQQSFIEGRIQEIEGKLSNAQ) form a coiled coil.

The protein belongs to the GreA/GreB family.

Its function is as follows. Necessary for efficient RNA polymerase transcription elongation past template-encoded arresting sites. The arresting sites in DNA have the property of trapping a certain fraction of elongating RNA polymerases that pass through, resulting in locked ternary complexes. Cleavage of the nascent transcript by cleavage factors such as GreA or GreB allows the resumption of elongation from the new 3'terminus. GreA releases sequences of 2 to 3 nucleotides. This Halorhodospira halophila (strain DSM 244 / SL1) (Ectothiorhodospira halophila (strain DSM 244 / SL1)) protein is Transcription elongation factor GreA.